A 674-amino-acid chain; its full sequence is HDA1 complex subunit 2 (674 aa).

Residues 185–196 are compositionally biased toward polar residues; sequence TVDSTINKDGTP. Positions 185–211 are disordered; it reads TVDSTINKDGTPNSVSSTSSNSNSTSY. The span at 197–211 shows a compositional bias: low complexity; sequence NSVSSTSSNSNSTSY. The stretch at 468 to 637 forms a coiled coil; the sequence is FKKKQEVEKS…RNKFLKNYIT (170 aa).

This sequence belongs to the HDA2/3 family. HDA2 subfamily. Heterodimer with HDA3. Component of the HDA1 histone deacetylase complex composed of at least one HDA1 homodimer and one HDA2/HDA3 heterodimer. Interacts with HDA1 and HDA3.

The protein localises to the nucleus. Functionally, required for activity of HDA1 histone deacetylase complex. The HDA1 histone deacetylase complex is responsible for the deacetylation of lysine residues on the N-terminal part of the core histones (H2A, H2B, H3 and H4). Histone deacetylation gives a tag for epigenetic repression and plays an important role in transcriptional regulation, cell cycle progression and developmental events. The protein is HDA1 complex subunit 2 (HDA2) of Saccharomyces cerevisiae (strain ATCC 204508 / S288c) (Baker's yeast).